The chain runs to 341 residues: Dye-decolorizing peroxidase (341 aa).

The active-site Proton acceptor is aspartate 148. Histidine 221 lines the heme pocket. Residues 304-341 (FLDDPPDAPTRLVPEATFTAPISDGSLGIGSLKRSAQQ) are targeting peptide.

The protein belongs to the DyP-type peroxidase family. As to quaternary structure, homohexamer. It depends on heme b as a cofactor.

It localises to the encapsulin nanocompartment. Its function is as follows. Cargo protein of a type 1 encapsulin nanocompartment. Has both general peroxidase activity and dye-decolorizing activity. Can catalyze the oxidation of both protoporphyrinogen IX and coproporphyrinogen III to their corresponding porphyrins. Also efficiently decolorizes the dyes alizarin red and Cibacron blue F3GA. This cargo-loaded encapsulin nanocompartment is probably involved in protection against oxidative damage. This chain is Dye-decolorizing peroxidase, found in Rhodococcus erythropolis (strain PR4 / NBRC 100887).